Here is a 644-residue protein sequence, read N- to C-terminus: DNA mismatch repair protein MutL (644 aa).

Disordered stretches follow at residues 338-390 and 416-445; these read RPNA…ERPA and QPQE…DDTQ. Low complexity-rich tracts occupy residues 349–366 and 416–427; these read EATP…EASA and QPQEAAEEAAGT.

Belongs to the DNA mismatch repair MutL/HexB family.

Functionally, this protein is involved in the repair of mismatches in DNA. It is required for dam-dependent methyl-directed DNA mismatch repair. May act as a 'molecular matchmaker', a protein that promotes the formation of a stable complex between two or more DNA-binding proteins in an ATP-dependent manner without itself being part of a final effector complex. This is DNA mismatch repair protein MutL from Chromohalobacter salexigens (strain ATCC BAA-138 / DSM 3043 / CIP 106854 / NCIMB 13768 / 1H11).